The following is a 306-amino-acid chain: tRNA dimethylallyltransferase (306 aa).

9-16 (GPTAIGKT) contacts ATP. Residue 11 to 16 (TAIGKT) participates in substrate binding. The interaction with substrate tRNA stretch occupies residues 34–37 (DSMQ).

The protein belongs to the IPP transferase family. Monomer. Mg(2+) is required as a cofactor.

The enzyme catalyses adenosine(37) in tRNA + dimethylallyl diphosphate = N(6)-dimethylallyladenosine(37) in tRNA + diphosphate. Catalyzes the transfer of a dimethylallyl group onto the adenine at position 37 in tRNAs that read codons beginning with uridine, leading to the formation of N6-(dimethylallyl)adenosine (i(6)A). This Lactobacillus acidophilus (strain ATCC 700396 / NCK56 / N2 / NCFM) protein is tRNA dimethylallyltransferase.